Reading from the N-terminus, the 440-residue chain is Proline--tRNA ligase (440 aa).

Belongs to the class-II aminoacyl-tRNA synthetase family. ProS type 2 subfamily. As to quaternary structure, homodimer.

The protein localises to the cytoplasm. The catalysed reaction is tRNA(Pro) + L-proline + ATP = L-prolyl-tRNA(Pro) + AMP + diphosphate. In terms of biological role, catalyzes the attachment of proline to tRNA(Pro) in a two-step reaction: proline is first activated by ATP to form Pro-AMP and then transferred to the acceptor end of tRNA(Pro). The sequence is that of Proline--tRNA ligase from Azorhizobium caulinodans (strain ATCC 43989 / DSM 5975 / JCM 20966 / LMG 6465 / NBRC 14845 / NCIMB 13405 / ORS 571).